The primary structure comprises 284 residues: MTARIIDGVALSQRIREEVAERAAALTAQGVRPGLAVVLVGEDPASQVYVRNKVAACEKAGLHSVKEQYPADLSEADLLARIDALNRDPSIHGILVQLPLPAHLDSHKVIEAIAPEKDVDGFHISNAGLLMTGQPLFRPCTPYGVMKMLESEGVTLRGAEAVVVGASNIVGKPMAMLLLAAGATVTICNSKTRDLAAQTRRADVLVVATGRPRMITGDMIKPGAVVIDVGINRGDDGKLCGDVDFASAQQVAGAITPVPGGVGPMTIAMLMVNTLQAAERTLTP.

NADP(+)-binding positions include Gly-165–Ser-167, Ser-190, and Ile-231.

This sequence belongs to the tetrahydrofolate dehydrogenase/cyclohydrolase family. In terms of assembly, homodimer.

The catalysed reaction is (6R)-5,10-methylene-5,6,7,8-tetrahydrofolate + NADP(+) = (6R)-5,10-methenyltetrahydrofolate + NADPH. It catalyses the reaction (6R)-5,10-methenyltetrahydrofolate + H2O = (6R)-10-formyltetrahydrofolate + H(+). The protein operates within one-carbon metabolism; tetrahydrofolate interconversion. Its function is as follows. Catalyzes the oxidation of 5,10-methylenetetrahydrofolate to 5,10-methenyltetrahydrofolate and then the hydrolysis of 5,10-methenyltetrahydrofolate to 10-formyltetrahydrofolate. In Bordetella avium (strain 197N), this protein is Bifunctional protein FolD.